A 115-amino-acid polypeptide reads, in one-letter code: Meiotically up-regulated gene 42 protein (115 aa).

Functionally, has a role in meiosis. This Schizosaccharomyces pombe (strain 972 / ATCC 24843) (Fission yeast) protein is Meiotically up-regulated gene 42 protein (mug42).